Consider the following 158-residue polypeptide: Small ribosomal subunit protein uS7c (158 aa).

Belongs to the universal ribosomal protein uS7 family. As to quaternary structure, part of the 30S ribosomal subunit.

The protein resides in the plastid. It localises to the chloroplast. Its function is as follows. One of the primary rRNA binding proteins, it binds directly to 16S rRNA where it nucleates assembly of the head domain of the 30S subunit. This is Small ribosomal subunit protein uS7c (rps7) from Trieres chinensis (Marine centric diatom).